The primary structure comprises 225 residues: Riboflavin kinase (225 aa).

Residues 1-89 (MPDIEYLKKL…SRIFSSEPDT (89 aa)) form a unknown region. The riboflavin kinase stretch occupies residues 90–225 (LELEGNVLKG…LKKQGMEGQK (136 aa)). 99 to 104 (GLGEGQ) provides a ligand contact to CDP. Residues Thr128 and Asn130 each contribute to the Mg(2+) site. FMN contacts are provided by Thr185 and Glu193. 198-201 (VKLR) contacts CDP.

This sequence belongs to the archaeal riboflavin kinase family. Requires Mg(2+) as cofactor.

It catalyses the reaction riboflavin + CTP = CDP + FMN + H(+). It participates in cofactor biosynthesis; FMN biosynthesis; FMN from riboflavin (CTP route): step 1/1. In terms of biological role, catalyzes the CTP-dependent phosphorylation of riboflavin (vitamin B2) to form flavin mononucleotide (FMN). The protein is Riboflavin kinase (ribK) of Methanosarcina mazei (strain ATCC BAA-159 / DSM 3647 / Goe1 / Go1 / JCM 11833 / OCM 88) (Methanosarcina frisia).